The sequence spans 319 residues: Dehydrogenase/reductase SDR family member 9 (319 aa).

Positions 1–17 (MLFWLLVLLILCGFLWN) are cleaved as a signal peptide. NAD(+)-binding positions include 34 to 58 (ITGC…HVIA) and Asp83. Ser164 is a substrate binding site. Tyr176 acts as the Proton acceptor in catalysis. Lys180 contacts NAD(+).

This sequence belongs to the short-chain dehydrogenases/reductases (SDR) family. Homotetramer.

It localises to the microsome membrane. It is found in the endoplasmic reticulum membrane. It carries out the reaction 3beta-hydroxy-5alpha-pregnane-20-one + NAD(+) = 5alpha-pregnane-3,20-dione + NADH + H(+). The enzyme catalyses 17beta-hydroxy-5alpha-androstan-3-one + NAD(+) = 5alpha-androstan-3,17-dione + NADH + H(+). The catalysed reaction is androsterone + NAD(+) = 5alpha-androstan-3,17-dione + NADH + H(+). It catalyses the reaction 5alpha-androstane-3alpha,17beta-diol + NAD(+) = 17beta-hydroxy-5alpha-androstan-3-one + NADH + H(+). It carries out the reaction all-trans-retinol + NAD(+) = all-trans-retinal + NADH + H(+). The enzyme catalyses 3alpha-hydroxy-5alpha-pregnan-20-one + NAD(+) = 5alpha-pregnane-3,20-dione + NADH + H(+). In terms of biological role, 3-alpha-hydroxysteroid dehydrogenase that converts 3-alpha-tetrahydroprogesterone (allopregnanolone) to dihydroxyprogesterone and 3-alpha-androstanediol to dihydroxyprogesterone. Also plays a role in the biosynthesis of retinoic acid from retinaldehyde. Can utilize both NADH and NADPH. The chain is Dehydrogenase/reductase SDR family member 9 (DHRS9) from Bos taurus (Bovine).